The primary structure comprises 218 residues: Hypoxanthine-guanine phosphoribosyltransferase (218 aa).

At Ala2 the chain carries N-acetylalanine. Lys69 lines the GMP pocket. Lys103 carries the post-translational modification N6-acetyllysine. Residue Lys115 forms a Glycyl lysine isopeptide (Lys-Gly) (interchain with G-Cter in SUMO1); alternate linkage. A Glycyl lysine isopeptide (Lys-Gly) (interchain with G-Cter in SUMO2); alternate cross-link involves residue Lys115. GMP is bound by residues 134–142 (EDIIDTGKT), Lys166, 186–188 (KFV), and Asp194. Asp138 acts as the Proton acceptor in catalysis. Thr142 bears the Phosphothreonine mark. Asp194 lines the Mg(2+) pocket.

This sequence belongs to the purine/pyrimidine phosphoribosyltransferase family. In terms of assembly, homotetramer. Mg(2+) serves as cofactor.

It localises to the cytoplasm. It carries out the reaction IMP + diphosphate = hypoxanthine + 5-phospho-alpha-D-ribose 1-diphosphate. The enzyme catalyses GMP + diphosphate = guanine + 5-phospho-alpha-D-ribose 1-diphosphate. Its pathway is purine metabolism; IMP biosynthesis via salvage pathway; IMP from hypoxanthine: step 1/1. Converts guanine to guanosine monophosphate, and hypoxanthine to inosine monophosphate. Transfers the 5-phosphoribosyl group from 5-phosphoribosylpyrophosphate onto the purine. Plays a central role in the generation of purine nucleotides through the purine salvage pathway. This is Hypoxanthine-guanine phosphoribosyltransferase (HPRT1) from Sus scrofa (Pig).